The following is a 2280-amino-acid chain: MRQSVTSSSSCSKLYAIKATISLPRLFYRRLRTMAPRVASHFLGGNSLDKAPAGKVKDYIASHGGHTVITSILIANNGIAAVKEIRSIRKWAYETFNNERAIKFTVMATPDDLKVNADYIRMADQYVEVPGGSNNNNYANVELIVDIAERMNVHAVWAGWGHASENPKLPEMLSASSKKIVFIGPPGSAMRSLGDKISSTIVAQSARVPCMSWSGNELDQVRIDEETNIVTVDDDVYQKACIRSAEEGIAVAEKIGYPVMIKASEGGGGKGIRQVTSTEKFAQAFQQVLDELPGSPVFVMKLAGQARHLEVQILADQYGNNISLFGRDCSVQRRHQKIIEEAPVTIAPAATFHEMERAAVRLGELVGYASAGTIEYLYEPENDRFYFLELNPRLQVEHPTTEMVSGVNLPAAQLQVAMGLPLSRIPHIRELYGLPRDGDSEIDFFFQNPESFKVQKVPTPKGHCVACRITSEDPGEGFKPSSGMIKDLNFRSSSNVWGYFSVGTAGGIHEFADSQFGHIFSFAESRESSRKSMVVALKELSIRGDFRTTVEYLVRLLETKEFSENEFTTGWLDRLIAQKVTSARPDKMLAVVCGALVRAHATADTQYRAFKSYLERGQVPSREFLKNVYDIEFIYDNTRYRFTASRSSPGSYHLFLNGSRCTAGVRSLTDGGLLVLLNGHSYTVYYRDEVTGTRISIDNLSCMLEQENDPTQLRTPSPGKLVRFLVETGEHIKAGEAYAEVEVMKMIMPLVATEDGVVQLIKQPGASLDAGDILGILTLDDPSRVTHALPFDGQLPNWGEPQIAGNKPCQRYHALLCILLDILKGYDNQIILNSTYNEFVEVLRNHELPYSEWSAHYSALVNRISPVLDKLFVSIIEKARSRKAEFPAKQLEVAIQTYCDGQNLATTQQLKVQIAPLLKIISDYKDGLKVHEYNVIKGLLEEYYNVEKLFSGINKREEDVILRLRDENKDDVDKVIALALSHSRIGSKNNLLITILDLMKSEPSTFVSLYFNDILRKLTDLDSRVTSKVSLKARELLITCAMPSLNERFSQMEHILKSSVVESHYGDAKFSHRTPSLDILKELIDSKYTVFDVLPAFFCHTDPWVSLAALEVYVRRAYRAYSVLEINYHTEAGTPYVLTWRFQLHSSGAPGLGANSTNGSNFPASTTPSYENSNRRLQSVSDLSWYVNKTDSEPFRFGTMIAAETFDELENNLALAIDRLPLSRNYFNAGLTLDGNSSSANDNTQELTNVVNVALTSTGDLDDSAIVSKLNQILSDFRDDLLEHNVRRVTIVGGRINKSAYPSYYTYRVSAEQKDGNLVHYNEDERIRHIEPALAFQLELGRLSNFNIEPVFTDNHNIHVYRATAKNMDTDKRFFTRALVRPGRLRDEIPTAEYLISETHRLINDILDALEVIGHEQTDLNHIFINFTPAFGLAPKQVEAALGGFLERFGRRLWRLRVTAAEIRIICTDPSTNTLFPLRVIISNVSGFVVNVEIYAEVKTENNSWIFKSIGQPGSMHLRPISTPYPTKEWLQPRRYKAQLMGTTFVYDFPELFRRAFTDSWKKVPNGRSKVTIPQNMFECKELVADEHGVLQEVNREPGTNSCGMVAWCITVKTPEYPNGRKIIVVANDITFQIGSFGPQEDEYFYKVTQLARQRGIPRIYLAANSGARIGVADEIVPLFNIAWVDPDSPEKGFDYIYLTPEAYERLQKENPNILTTEEVVTETGELRHKITTIIGSSEGLGVECLRGSGLIAGVTSRAYNDIFTCTLVTCRAVGIGAYLVRLGQRAVQIEGQPIILTGAPALNKVLGREVYTSNLQLGGTQVMHRNGISHLTSQDDFDGISKIVNWISYIPDKRNNPVPISPSSDTWDRDVEFYPSQNGYDPRWLIAGKEDEDSFLYGLFDKGSFQETLNGWAKTVVVGRARMGGIPTGVIAVETRTIENTVPADPANPDSTEQVLMEAGQVWYPNSAFKTAQAINDFNHGEQLPLFILANWRGFSGGQRDMFNEVLKYGSYIVDALASYKQPVFVYIPPFSELRGGSWVVVDPTINEDQMEMYADEESRAGVLEPEGMVSIKFRREKLLSLMRRCDHKYASLCNELKRDDLSADDLSTIKVKLMEREQKLMPIYQQISIHFADLHDRVGRMVAKKVVRKPLKWTEARRFFYWRLRRRLNEHYALQKITQLIPSLTIRESREYLQKWYEEWCGKQDWDESDKSVVCWIEEHNDDLSKRTQELKSTYYSERLSKLLRSDRKGMIDSLAQVLTELDENEKKELAGKLASVN.

In terms of domain architecture, Biotin carboxylation spans 68–577 (VITSILIANN…TTGWLDRLIA (510 aa)). Residues 226 to 418 (ETNIVTVDDD…LPAAQLQVAM (193 aa)) enclose the ATP-grasp domain. 266 to 271 (GGGGKG) is an ATP binding site. Positions 375, 389, and 391 each coordinate Mn(2+). Residue R393 is part of the active site. In terms of domain architecture, Biotinyl-binding spans 704 to 778 (LEQENDPTQL…DAGDILGILT (75 aa)). At K745 the chain carries N6-biotinyllysine. Phosphoserine occurs at positions 1179 and 1181. The CoA carboxyltransferase N-terminal domain maps to 1524–1863 (PYPTKEWLQP…KRNNPVPISP (340 aa)). The tract at residues 1524–2181 (PYPTKEWLQP…EHYALQKITQ (658 aa)) is carboxyltransferase. Residues R1772, K2074, and R2076 each contribute to the CoA site. Positions 1867 to 2181 (TWDRDVEFYP…EHYALQKITQ (315 aa)) constitute a CoA carboxyltransferase C-terminal domain.

Interacts with sad1. Biotin is required as a cofactor. Mn(2+) serves as cofactor.

It localises to the cytoplasm. The enzyme catalyses hydrogencarbonate + acetyl-CoA + ATP = malonyl-CoA + ADP + phosphate + H(+). The catalysed reaction is N(6)-biotinyl-L-lysyl-[protein] + hydrogencarbonate + ATP = N(6)-carboxybiotinyl-L-lysyl-[protein] + ADP + phosphate + H(+). The protein operates within lipid metabolism; malonyl-CoA biosynthesis; malonyl-CoA from acetyl-CoA: step 1/1. With respect to regulation, by phosphorylation. In terms of biological role, carries out three functions: biotin carboxyl carrier protein, biotin carboxylase and carboxyltransferase. The chain is Acetyl-CoA carboxylase (cut6) from Schizosaccharomyces pombe (strain 972 / ATCC 24843) (Fission yeast).